We begin with the raw amino-acid sequence, 903 residues long: Centrobin (903 aa).

Positions 1–10 are enriched in polar residues; that stretch reads MATSADSPSS. Positions 1–34 are disordered; the sequence is MATSADSPSSPLGAEDLLSDSSEPPGLNQVSSEV. The residue at position 80 (Ser80) is a Phosphoserine. Disordered stretches follow at residues 110 to 140, 471 to 493, 568 to 597, 669 to 704, 772 to 799, and 837 to 903; these read LQTSRDTAYRDPLIPGAGSERREEDSFDSDS, LRQAASLREHHRKQLQDLSGQHQ, LSTTLPPPNPPAPPAGPSSPGPQEPEKEER, SALGAFHPDHRAERPFPEEDPGPDGEGLLKQGLPPA, RVPEPPSSHSQGSGPSSGSPERGGDGLT, and SGTD…GVWR. Residues 196–560 are a coiled coil; it reads RRKHCERHIQ…ERLQAMLQAH (365 aa). The segment at 365-903 is required for centrosome localization; that stretch reads QEHQLKEHYQ…SMRSRGGVWR (539 aa). Positions 572 to 590 are enriched in pro residues; the sequence is LPPPNPPAPPAGPSSPGPQ. The span at 675–685 shows a compositional bias: basic and acidic residues; the sequence is HPDHRAERPFP. Low complexity predominate over residues 778 to 791; sequence SSHSQGSGPSSGSP. A Phosphoserine modification is found at Ser790. Residues 837-863 are compositionally biased toward basic and acidic residues; the sequence is SGTDGRGDNVPRRNTDSRLGEIPRKEI.

Interacts with LYST. As to expression, widely expressed (at protein level). Highly expressed in testis. Also expressed in spleen, thymus, prostate, small intestine, colon and peripheral blood leukocytes.

It localises to the cytoplasm. The protein resides in the cytoskeleton. Its subcellular location is the microtubule organizing center. It is found in the centrosome. The protein localises to the centriole. In terms of biological role, required for centriole duplication. Inhibition of centriole duplication leading to defects in cytokinesis. This is Centrobin (CNTROB) from Homo sapiens (Human).